The primary structure comprises 235 residues: ATP synthase subunit a (235 aa).

A run of 5 helical transmembrane segments spans residues Thr-17 to Met-37, Ser-76 to Phe-96, Pro-113 to Ala-133, Leu-179 to Phe-201, and Val-211 to Ser-230.

This sequence belongs to the ATPase A chain family. As to quaternary structure, F-type ATPases have 2 components, CF(1) - the catalytic core - and CF(0) - the membrane proton channel. CF(1) has five subunits: alpha(3), beta(3), gamma(1), delta(1), epsilon(1). CF(0) has three main subunits: a(1), b(2) and c(9-12). The alpha and beta chains form an alternating ring which encloses part of the gamma chain. CF(1) is attached to CF(0) by a central stalk formed by the gamma and epsilon chains, while a peripheral stalk is formed by the delta and b chains.

The protein resides in the cell membrane. Key component of the proton channel; it plays a direct role in the translocation of protons across the membrane. The protein is ATP synthase subunit a of Limosilactobacillus reuteri subsp. reuteri (strain JCM 1112) (Lactobacillus reuteri).